We begin with the raw amino-acid sequence, 693 residues long: ATP-dependent DNA helicase RecG (693 aa).

Residues 48 to 146 (THLYPIGELL…GDLSTPELQE (99 aa)) are wedge domain. The region spanning 283–448 (DMALDVPMMR…AYADLDTSVI (166 aa)) is the Helicase ATP-binding domain. ATP is bound at residue 296 to 303 (GDVGSGKT). The DEAH box motif lies at 397–400 (DEQH). One can recognise a Helicase C-terminal domain in the interval 482–628 (EGRQAYWVCT…GFVIAQKDLE (147 aa)).

It belongs to the helicase family. RecG subfamily. As to quaternary structure, monomer in solution. Probably a monomer on HJ DNA. Binding to fork DNA is facilitated by SSB; the proteins do not seem to stably associate. Requires Mg(2+) as cofactor.

The enzyme catalyses Couples ATP hydrolysis with the unwinding of duplex DNA by translocating in the 3'-5' direction.. It carries out the reaction ATP + H2O = ADP + phosphate + H(+). Its function is as follows. Plays a critical role in recombination and DNA repair. Helps process Holliday junction (HJ) intermediates to mature products by catalyzing branch migration. Has replication fork regression activity, unwinds stalled or blocked replication forks to make a HJ that can be resolved by RuvC or RusA. Also rewinds unwound dsDNA in an ATP-dependent manner. Has double-stranded (ds)DNA unwinding activity characteristic of a DNA helicase with 3'-5' polarity in vitro on linear dsDNA; branched duplex DNA (Y-DNA) substrates adopt different conformations that influence which of the two arms are unwound. Binds and unwinds HJ and Y-DNA but not linear duplex DNA; binds no more than 10 nucleotides of ssDNA at a fork. Has a role in constitutive stable DNA replication (cSDR, DNA replication in the absence of protein synthesis) and R-loop (RNA annealed with dsDNA) formation. Unwinds R-loops but not RNA:DNA hybrids. Is genetically synergistic to RadA and RuvABC. The chain is ATP-dependent DNA helicase RecG from Escherichia coli (strain K12).